The following is a 430-amino-acid chain: ATP-dependent RNA helicase RhlB (430 aa).

Positions 9–37 (QKFSDFALHPQVIEALETKGFHNCTPIQA) match the Q motif motif. The Helicase ATP-binding domain occupies 40–219 (LPFTLSGRDV…FENMNNAEYV (180 aa)). 53-60 (AQTGTGKT) contributes to the ATP binding site. Residues 165 to 168 (DEAD) carry the DEAD box motif. The Helicase C-terminal domain occupies 245 to 390 (RLLQTLIEEE…VSRYNSDALM (146 aa)). Residues 388 to 430 (ALMTDLPPPKRLTRNRSGNGPRRGGNNNRRSSASRSPNRKRSG) are disordered. Residues 402 to 423 (NRSGNGPRRGGNNNRRSSASRS) are compositionally biased toward low complexity.

This sequence belongs to the DEAD box helicase family. RhlB subfamily. In terms of assembly, component of the RNA degradosome, which is a multiprotein complex involved in RNA processing and mRNA degradation.

It is found in the cytoplasm. It carries out the reaction ATP + H2O = ADP + phosphate + H(+). In terms of biological role, DEAD-box RNA helicase involved in RNA degradation. Has RNA-dependent ATPase activity and unwinds double-stranded RNA. The protein is ATP-dependent RNA helicase RhlB of Erwinia tasmaniensis (strain DSM 17950 / CFBP 7177 / CIP 109463 / NCPPB 4357 / Et1/99).